The sequence spans 79 residues: UPF0154 protein SAK_1616 (79 aa).

The helical transmembrane segment at 5-25 (IWILLIIVALFGGLVGGIFIA) threads the bilayer.

It belongs to the UPF0154 family.

The protein resides in the cell membrane. This Streptococcus agalactiae serotype Ia (strain ATCC 27591 / A909 / CDC SS700) protein is UPF0154 protein SAK_1616.